We begin with the raw amino-acid sequence, 660 residues long: DNA mismatch repair protein MutL (660 aa).

The tract at residues 408–436 (DQTSASASVKHASRSQDENQLSEHPNLDF) is disordered. Residues 425–436 (ENQLSEHPNLDF) show a composition bias toward polar residues.

It belongs to the DNA mismatch repair MutL/HexB family.

This protein is involved in the repair of mismatches in DNA. It is required for dam-dependent methyl-directed DNA mismatch repair. May act as a 'molecular matchmaker', a protein that promotes the formation of a stable complex between two or more DNA-binding proteins in an ATP-dependent manner without itself being part of a final effector complex. The polypeptide is DNA mismatch repair protein MutL (Streptococcus uberis (strain ATCC BAA-854 / 0140J)).